The following is a 231-amino-acid chain: Large ribosomal subunit protein uL1 (231 aa).

Belongs to the universal ribosomal protein uL1 family. As to quaternary structure, part of the 50S ribosomal subunit.

Its function is as follows. Binds directly to 23S rRNA. The L1 stalk is quite mobile in the ribosome, and is involved in E site tRNA release. Protein L1 is also a translational repressor protein, it controls the translation of the L11 operon by binding to its mRNA. This Acinetobacter baumannii (strain AB307-0294) protein is Large ribosomal subunit protein uL1.